The following is a 195-amino-acid chain: Large ribosomal subunit protein bL9 (195 aa).

Belongs to the bacterial ribosomal protein bL9 family.

Its function is as follows. Binds to the 23S rRNA. In Rhodopseudomonas palustris (strain TIE-1), this protein is Large ribosomal subunit protein bL9.